The primary structure comprises 1544 residues: Lysine-specific demethylase 5B (1544 aa).

The 42-residue stretch at 32-73 (CPVFEPSWEEFADPFAFIHKIRPIAEQTGICKVRPPPDWQPP) folds into the JmjN domain. One can recognise an ARID domain in the interval 97 to 187 (TRVKLNFLDQ…ILNPYNLFLS (91 aa)). Residues K148, K204, K209, K242, K274, and K278 each participate in a glycyl lysine isopeptide (Lys-Gly) (interchain with G-Cter in SUMO2) cross-link. Residues 201–230 (TDTKDKEYKPHDIPQRQSVQPSETCPPARR) are disordered. Over residues 202-214 (DTKDKEYKPHDIP) the composition is skewed to basic and acidic residues. Residues 309 to 359 (LYVCLLCGSGNDEDRLLLCDGCDDSYHTFCLIPPLHDVPKGDWRCPKCLAQ) form a PHD-type 1 zinc finger. Y425 is a binding site for 2-oxoglutarate. The JmjC domain occupies 453 to 619 (EYLDSGWNLN…LGRQCVEHYR (167 aa)). H499 and E501 together coordinate Fe cation. Residues S507, N509, and K517 each coordinate 2-oxoglutarate. A Fe cation-binding site is contributed by H587. The C5HC2 zinc finger occupies 692-744 (CVKCKTTCFMSAISCSCKPGLLVCLHHVKELCSCPPYKYKLRYRYTLDDLYPM). K769 participates in a covalent cross-link: Glycyl lysine isopeptide (Lys-Gly) (interchain with G-Cter in SUMO2). At K832 the chain carries N6-acetyllysine. Position 986 is a phosphoserine (S986). The PHD-type 2 zinc finger occupies 1176–1224 (IKICLCQKAPAAPMIQCELCRDAFHTSCVAVPSISQGLRIWLCPHCRRS). A Phosphoserine modification is found at S1328. The disordered stretch occupies residues 1374-1400 (PSPAQQTDRSSPVRPSSEKNDCCRGKR). Residues 1376–1387 (PAQQTDRSSPVR) show a composition bias toward polar residues. Basic and acidic residues predominate over residues 1389 to 1400 (SSEKNDCCRGKR). K1450 participates in a covalent cross-link: Glycyl lysine isopeptide (Lys-Gly) (interchain with G-Cter in SUMO2). At S1456 the chain carries Phosphoserine. A PHD-type 3 zinc finger spans residues 1484-1538 (DAICPAVSCLQPEGDEVDWVQCDGSCNQWFHQVCVGVSPEMAEKEDYICVRCTVK).

This sequence belongs to the JARID1 histone demethylase family. In terms of assembly, interacts with FOXG1B, PAX9, MYC, MYCN and RB1. Interacts with HDAC1, HDAC4, HDAC5 and HDAC7. Interacts (via PHD-type 1 zinc finger) with histone H3 unmodified at 'Lys-4'; the interaction is inhibited when histone H3 is methylated at 'Arg-2' or 'Lys-4'. The cofactor is Fe(2+). In terms of tissue distribution, ubiquitously expressed, with highest levels in testis. Down-regulated in melanoma and glioblastoma. Up-regulated in breast cancer (at protein level).

Its subcellular location is the nucleus. The enzyme catalyses N(6),N(6),N(6)-trimethyl-L-lysyl(4)-[histone H3] + 3 2-oxoglutarate + 3 O2 = L-lysyl(4)-[histone H3] + 3 formaldehyde + 3 succinate + 3 CO2. Several specific inhibitors are being developed and tested. The inhibitor KDOAM-25 inhibits its demethylase activity, resulting to cell cycle arrest in myeloma cells. Its function is as follows. Histone demethylase that demethylates 'Lys-4' of histone H3, thereby playing a central role in histone code. Does not demethylate histone H3 'Lys-9' or H3 'Lys-27'. Demethylates trimethylated, dimethylated and monomethylated H3 'Lys-4'. Acts as a transcriptional corepressor for FOXG1B and PAX9. Favors the proliferation of breast cancer cells by repressing tumor suppressor genes such as BRCA1 and HOXA5. In contrast, may act as a tumor suppressor for melanoma. Represses the CLOCK-BMAL1 heterodimer-mediated transcriptional activation of the core clock component PER2. This chain is Lysine-specific demethylase 5B (KDM5B), found in Homo sapiens (Human).